Consider the following 368-residue polypeptide: D-alanine--D-alanine ligase (368 aa).

In terms of domain architecture, ATP-grasp spans 141–350 (KMIWDYSGLP…YNELIMHLIE (210 aa)). 176–231 (EKDLEYPLFIKPCRAGSSVGAGMVKNRNELLEQAEESFLWDNKILVEACIEAREVE) serves as a coordination point for ATP. Mg(2+) contacts are provided by Asp303, Glu317, and Asn319.

The protein belongs to the D-alanine--D-alanine ligase family. Mg(2+) serves as cofactor. The cofactor is Mn(2+).

It is found in the cytoplasm. It carries out the reaction 2 D-alanine + ATP = D-alanyl-D-alanine + ADP + phosphate + H(+). It participates in cell wall biogenesis; peptidoglycan biosynthesis. Cell wall formation. The chain is D-alanine--D-alanine ligase from Treponema denticola (strain ATCC 35405 / DSM 14222 / CIP 103919 / JCM 8153 / KCTC 15104).